A 262-amino-acid chain; its full sequence is MKIRVGVIGCLGRMGKKILNELITNTKVEIAGAVARLGSEYIGLDIGPIVGNNCNLGIKITSSISEVFESSDVVIDFTTKECMLECLKAAVKFKKPLVSGTTGIEGLNLKDYAAKVPILWSANMSIGVNVLLKLVKEAAKLLGNEYDVEIWEMHHNLKKDSPSGTAIEFGKAVANAAKVDFELNQYSHNNSNIRGKGGIGFAVSRGGGVIGDHSVMFVNYDERVELNHKAIDRTTFARGAVQAAIWLCENKTPGLYSMQDLV.

9–14 (GCLGRM) contacts NAD(+). NADP(+) is bound at residue arginine 36. Residues 100–102 (GTT) and 121–124 (SANM) each bind NAD(+). Histidine 154 (proton donor/acceptor) is an active-site residue. Histidine 155 lines the (S)-2,3,4,5-tetrahydrodipicolinate pocket. The active-site Proton donor is lysine 158. 164-165 (GT) lines the (S)-2,3,4,5-tetrahydrodipicolinate pocket.

It belongs to the DapB family.

It localises to the cytoplasm. The catalysed reaction is (S)-2,3,4,5-tetrahydrodipicolinate + NAD(+) + H2O = (2S,4S)-4-hydroxy-2,3,4,5-tetrahydrodipicolinate + NADH + H(+). The enzyme catalyses (S)-2,3,4,5-tetrahydrodipicolinate + NADP(+) + H2O = (2S,4S)-4-hydroxy-2,3,4,5-tetrahydrodipicolinate + NADPH + H(+). It functions in the pathway amino-acid biosynthesis; L-lysine biosynthesis via DAP pathway; (S)-tetrahydrodipicolinate from L-aspartate: step 4/4. Functionally, catalyzes the conversion of 4-hydroxy-tetrahydrodipicolinate (HTPA) to tetrahydrodipicolinate. The polypeptide is 4-hydroxy-tetrahydrodipicolinate reductase (Wolbachia pipientis subsp. Culex pipiens (strain wPip)).